The primary structure comprises 173 residues: ATP synthase subunit b (173 aa).

The helical transmembrane segment at 12-34 (AFGNLYAIGWSAVNFLVLLALMY) threads the bilayer.

It belongs to the ATPase B chain family. As to quaternary structure, F-type ATPases have 2 components, F(1) - the catalytic core - and F(0) - the membrane proton channel. F(1) has five subunits: alpha(3), beta(3), gamma(1), delta(1), epsilon(1). F(0) has three main subunits: a(1), b(2) and c(10-14). The alpha and beta chains form an alternating ring which encloses part of the gamma chain. F(1) is attached to F(0) by a central stalk formed by the gamma and epsilon chains, while a peripheral stalk is formed by the delta and b chains.

Its subcellular location is the cell membrane. Functionally, f(1)F(0) ATP synthase produces ATP from ADP in the presence of a proton or sodium gradient. F-type ATPases consist of two structural domains, F(1) containing the extramembraneous catalytic core and F(0) containing the membrane proton channel, linked together by a central stalk and a peripheral stalk. During catalysis, ATP synthesis in the catalytic domain of F(1) is coupled via a rotary mechanism of the central stalk subunits to proton translocation. Its function is as follows. Component of the F(0) channel, it forms part of the peripheral stalk, linking F(1) to F(0). The polypeptide is ATP synthase subunit b (Syntrophomonas wolfei subsp. wolfei (strain DSM 2245B / Goettingen)).